The primary structure comprises 412 residues: Phytoene synthase 1, chloroplastic (412 aa).

A chloroplast-targeting transit peptide spans 1-129 (MSVALLWVVS…AYDRCGEVCA (129 aa)).

It belongs to the phytoene/squalene synthase family. As to quaternary structure, monomer. Interacts with SGR1.

It is found in the plastid. The protein localises to the chloroplast. It catalyses the reaction 2 (2E,6E,10E)-geranylgeranyl diphosphate = 15-cis-phytoene + 2 diphosphate. The protein operates within carotenoid biosynthesis; phytoene biosynthesis; all-trans-phytoene from geranylgeranyl diphosphate: step 1/1. Its function is as follows. Catalyzes the reaction from prephytoene diphosphate to phytoene. This chain is Phytoene synthase 1, chloroplastic (PSY1), found in Solanum lycopersicum (Tomato).